The primary structure comprises 193 residues: MVAELPVVESDRRLIWIDLEMTGLDTHRDSIIEIATVVTDAQLNVLAEGPEFAISHPLNVLEAMDEWNRNQHRHSGLWQRVLNSEIQHAQAEASTIAFLQQWVKIGASPMCGNSICQDRRFLHRQMPCLERYFHYRNLDVSTLKELAGCWSPSILDGVVKTSSHTALSDIYDSIAELRHYRKSMGTFAGLSVV.

The 164-residue stretch at 14-177 folds into the Exonuclease domain; that stretch reads LIWIDLEMTG…SDIYDSIAEL (164 aa). Tyr135 is a catalytic residue.

The protein belongs to the oligoribonuclease family.

The protein localises to the cytoplasm. In terms of biological role, 3'-to-5' exoribonuclease specific for small oligoribonucleotides. The polypeptide is Oligoribonuclease (Xylella fastidiosa (strain Temecula1 / ATCC 700964)).